The primary structure comprises 147 residues: Membrane-spanning 4-domains subfamily A member 6E (147 aa).

At 1 to 52 the chain is on the cytoplasmic side; sequence MTSQPISNETIIMLPSNVINFSQAEKPEPTNQGQDSLKKRLQAKVKVIGVHS. Residues 53 to 73 traverse the membrane as a helical segment; that stretch reads SLAGSILSALSALVGFILLSV. The Extracellular segment spans residues 74-120; sequence NPAALNPASLQCKLDEKDIPTRLLLSYDYHSPYTMDCHRAKASLAGT. A helical membrane pass occupies residues 121 to 141; that stretch reads LSLMLVSTVLEFCLAVLTAVL. The Cytoplasmic segment spans residues 142–147; it reads QWKQTV.

This sequence belongs to the MS4A family. As to expression, expressed by malignant and fetal tissue at very low levels.

Its subcellular location is the membrane. May be involved in signal transduction as a component of a multimeric receptor complex. This is Membrane-spanning 4-domains subfamily A member 6E (MS4A6E) from Homo sapiens (Human).